Reading from the N-terminus, the 365-residue chain is Oligosaccharides import ATP-binding protein MsmX (365 aa).

An ABC transporter domain is found at 4 to 235 (LRMEHIYKFY…PENVFVGGFI (232 aa)). 37 to 44 (GPSGCGKS) lines the ATP pocket.

This sequence belongs to the ABC transporter superfamily. In terms of assembly, the complex involved in maltodextrin import is composed of two ATP-binding proteins (MsmX), two transmembrane proteins (MdxF and MdxG) and a solute-binding protein (MdxE). The complex involved in arabinooligosaccharides uptake is composed of two ATP-binding proteins (MsmX), two transmembrane proteins (AraP and AraQ) and a solute-binding protein (AraN). The complex involved in galactooligosaccharides uptake is composed of two ATP-binding proteins (MsmX), two transmembrane proteins (GanP and GanQ) and a solute-binding protein (GanS). The complex involved in melibiose, raffinose and stachyose import is composed of two ATP-binding proteins (MsmX), two transmembrane proteins (MelC and MelD) and a solute-binding protein (MelE). The complex involved in polygalacturonan and rhamnogalacturonan type I uptake is probably composed of two ATP-binding proteins (MsmX), two transmembrane proteins (YtcP and YteP) and a solute-binding protein (YtcQ).

It localises to the cell membrane. Functionally, required to energize different ABC-type saccharide transporters. Part of the MdxEFG-MsmX ABC transporter complex involved in maltodextrin import, of the AraNPQ-MsmX complex involved in arabinooligosaccharides import, of the GanPQS-MsmX complex involved in galactooligosaccharides import, and of the MelEDC-MsmX complex involved in melibiose, raffinose and stachyose import. Is probably also part of the ABC transporter complex YtcQP-YteP-MsmX involved in polygalacturonan and rhamnogalacturonan type I import during pectin degradation. Responsible for energy coupling to the transport system. The protein is Oligosaccharides import ATP-binding protein MsmX (msmX) of Bacillus subtilis (strain 168).